Consider the following 142-residue polypeptide: Large ribosomal subunit protein uL11 (142 aa).

It belongs to the universal ribosomal protein uL11 family. Part of the ribosomal stalk of the 50S ribosomal subunit. Interacts with L10 and the large rRNA to form the base of the stalk. L10 forms an elongated spine to which L12 dimers bind in a sequential fashion forming a multimeric L10(L12)X complex. In terms of processing, one or more lysine residues are methylated.

In terms of biological role, forms part of the ribosomal stalk which helps the ribosome interact with GTP-bound translation factors. The polypeptide is Large ribosomal subunit protein uL11 (Photobacterium profundum (strain SS9)).